A 324-amino-acid chain; its full sequence is MQFTIFTHLTMALSYAVPILIAVAFLTLVERKVLSYMQARKGPNIVGPFGLLQPVADGVKLFIKEPVRPTTSSPILFIATPILALLLAITIWIPLPLPFSLTDLNLGLLFLLSMSSLAVYSILWSGWASNSKYALIGALRAVAQTISYEVTLAIILLSVIMLSGNYTLNTLATTQEPLYLIFSTWPLAMMWYISTLAETNRAPFDLTEGESELVSGFNVEYAAGPFALFFLAEYANIMLMNTLTAILFLNPSSLNLPSELFPLILATKTLLLSSGFLWVRASYPRFRYDQLMHLLWKNFLPLTLALCLWHTSLPISYAGIPPHL.

8 helical membrane-spanning segments follow: residues leucine 9–valine 29, isoleucine 75–leucine 95, leucine 106–glycine 126, valine 142–leucine 162, proline 177–alanine 197, leucine 228–phenylalanine 248, glutamate 259–valine 279, and leucine 300–isoleucine 320.

Belongs to the complex I subunit 1 family.

The protein localises to the mitochondrion inner membrane. The catalysed reaction is a ubiquinone + NADH + 5 H(+)(in) = a ubiquinol + NAD(+) + 4 H(+)(out). Functionally, core subunit of the mitochondrial membrane respiratory chain NADH dehydrogenase (Complex I) that is believed to belong to the minimal assembly required for catalysis. Complex I functions in the transfer of electrons from NADH to the respiratory chain. The immediate electron acceptor for the enzyme is believed to be ubiquinone. The chain is NADH-ubiquinone oxidoreductase chain 1 (MT-ND1) from Struthio camelus (Common ostrich).